The following is a 358-amino-acid chain: Pyruvate dehydrogenase E1 component subunit alpha (358 aa).

In terms of assembly, heterodimer of an alpha and a beta chain. It depends on thiamine diphosphate as a cofactor.

It catalyses the reaction N(6)-[(R)-lipoyl]-L-lysyl-[protein] + pyruvate + H(+) = N(6)-[(R)-S(8)-acetyldihydrolipoyl]-L-lysyl-[protein] + CO2. Functionally, the pyruvate dehydrogenase complex catalyzes the overall conversion of pyruvate to acetyl-CoA and CO(2). It contains multiple copies of three enzymatic components: pyruvate dehydrogenase (E1), dihydrolipoamide acetyltransferase (E2) and lipoamide dehydrogenase (E3). In Mycoplasma genitalium (strain ATCC 33530 / DSM 19775 / NCTC 10195 / G37) (Mycoplasmoides genitalium), this protein is Pyruvate dehydrogenase E1 component subunit alpha (pdhA).